A 310-amino-acid chain; its full sequence is Protease HtpX homolog (310 aa).

2 helical membrane passes run 16–36 (NAVL…VDVI) and 55–75 (IFPT…VVCI). Zn(2+) is bound at residue His-166. Glu-167 is a catalytic residue. His-170 contacts Zn(2+). The next 2 membrane-spanning stretches (helical) occupy residues 182-202 (VGIL…FFMG) and 214-234 (MILL…QMYL). Glu-239 lines the Zn(2+) pocket.

Belongs to the peptidase M48B family. Zn(2+) is required as a cofactor.

The protein localises to the cell inner membrane. This is Protease HtpX homolog from Helicobacter pylori (strain Shi470).